Reading from the N-terminus, the 103-residue chain is N(4)-acetylcytidine amidohydrolase (103 aa).

The 89-residue stretch at 6–94 (ITFFQRFQDD…IAGIYPDQTQ (89 aa)) folds into the ASCH domain. The active-site Proton acceptor is the Lys21. Catalysis depends on Thr24, which acts as the Nucleophile. The Proton donor role is filled by Glu74.

It belongs to the N(4)-acetylcytidine amidohydrolase family.

The catalysed reaction is N(4)-acetylcytidine + H2O = cytidine + acetate + H(+). The enzyme catalyses N(4)-acetyl-2'-deoxycytidine + H2O = 2'-deoxycytidine + acetate + H(+). It catalyses the reaction N(4)-acetylcytosine + H2O = cytosine + acetate + H(+). Its function is as follows. Catalyzes the hydrolysis of N(4)-acetylcytidine (ac4C). The polypeptide is N(4)-acetylcytidine amidohydrolase (Citrobacter koseri (strain ATCC BAA-895 / CDC 4225-83 / SGSC4696)).